We begin with the raw amino-acid sequence, 511 residues long: Dihydrolipoyl dehydrogenase, mitochondrial (511 aa).

FAD is bound by residues glutamate 75–cysteine 84, lysine 93, glycine 157, and threonine 187–serine 189. The cysteines at positions 84 and 89 are disulfide-linked. NAD(+)-binding positions include glycine 224–glutamate 231, glutamate 247, leucine 281, and glycine 316. FAD contacts are provided by residues aspartate 357 and methionine 363 to histidine 366. The active-site Proton acceptor is histidine 489.

This sequence belongs to the class-I pyridine nucleotide-disulfide oxidoreductase family. Homodimer. The cofactor is FAD.

The protein resides in the mitochondrion matrix. The enzyme catalyses N(6)-[(R)-dihydrolipoyl]-L-lysyl-[protein] + NAD(+) = N(6)-[(R)-lipoyl]-L-lysyl-[protein] + NADH + H(+). Its function is as follows. Lipoamide dehydrogenase is a component of the alpha-ketoacid dehydrogenase complexes. Malfunction of this protein blocks the progression of cell cycle from G1 to S phase. The sequence is that of Dihydrolipoyl dehydrogenase, mitochondrial (dld1) from Schizosaccharomyces pombe (strain 972 / ATCC 24843) (Fission yeast).